The primary structure comprises 857 residues: KH domain-containing protein HEN4 (857 aa).

Residues 1 to 15 are compositionally biased toward basic and acidic residues; that stretch reads MERNSVKFHAEKRSG. The tract at residues 1-27 is disordered; sequence MERNSVKFHAEKRSGAFDPGSGFGSSK. 4 consecutive KH domains span residues 46–110, 149–217, 451–521, and 541–610; these read HAAF…KLGA, TVVC…LVSI, DVVF…IMLI, and SITA…IFHI. The segment at 644 to 755 is disordered; the sequence is SDNPLSIGSH…RGLSDASGGL (112 aa). 2 stretches are compositionally biased toward polar residues: residues 645-665 and 673-688; these read DNPL…NSSS and SFLS…SRSV. Basic and acidic residues predominate over residues 718–730; sequence FTMDHSDNSHHLT. Over residues 746 to 755 the composition is skewed to low complexity; that stretch reads RGLSDASGGL. In terms of domain architecture, KH 5 spans 775 to 839; that stretch reads NTTVEIRVPA…DQTQAAQNLL (65 aa).

In terms of assembly, interacts with HUA1. Interacts with FLK and PEP.

It is found in the nucleus speckle. In terms of biological role, functions in floral reproductive organ identity in the third whorl and floral determinacy specification by specifically promoting the processing of AGAMOUS (AG) pre-mRNA. Functions in association with HUA1 and HUA2. This chain is KH domain-containing protein HEN4, found in Arabidopsis thaliana (Mouse-ear cress).